Here is a 191-residue protein sequence, read N- to C-terminus: Amelogenin, X isoform (191 aa).

A signal peptide spans 1–16 (MGTWILFACLLGAAFA). Phosphoserine is present on Ser32. The span at 95–117 (IPQQPMMPVPGQHSMTPIQHHQP) shows a compositional bias: low complexity. The segment at 95–191 (IPQQPMMPVP…TDKTKREEVD (97 aa)) is disordered. Over residues 118–171 (NLPPPAQQPYQPQPVQPQPHQPMQPQPPVHPMQPLPPQPPLPPMFPMQPLPPML) the composition is skewed to pro residues.

The protein belongs to the amelogenin family. As to quaternary structure, interacts with KRT5. Phosphorylated by FAM20C in vitro.

The protein localises to the secreted. Its subcellular location is the extracellular space. The protein resides in the extracellular matrix. Functionally, plays a role in biomineralization. Seems to regulate the formation of crystallites during the secretory stage of tooth enamel development. Thought to play a major role in the structural organization and mineralization of developing enamel. The chain is Amelogenin, X isoform (AMELX) from Homo sapiens (Human).